We begin with the raw amino-acid sequence, 324 residues long: Mitochondrial thiamine pyrophosphate carrier 1 (324 aa).

Solcar repeat units lie at residues 12-110 (GNRI…ISSA), 119-205 (PQPV…LRSP), and 212-307 (PFGT…VLGL). Transmembrane regions (helical) follow at residues 15-35 (IQVV…VAPL), 79-99 (ITGL…YGGI), 125-145 (FISG…LDLL), 182-202 (TAAI…YEAL), 218-238 (AGAG…LDLV), and 282-299 (GLTV…VTMW).

It belongs to the mitochondrial carrier (TC 2.A.29) family.

It is found in the mitochondrion inner membrane. Functionally, mitochondrial transporter that mediates uptake of thiamine pyrophosphate (ThPP) into mitochondria. This is Mitochondrial thiamine pyrophosphate carrier 1 (TPC1) from Ajellomyces capsulatus (strain NAm1 / WU24) (Darling's disease fungus).